The sequence spans 189 residues: Hypoxanthine/guanine phosphoribosyltransferase (189 aa).

It belongs to the purine/pyrimidine phosphoribosyltransferase family. Archaeal HPRT subfamily. Homodimer.

The protein resides in the cytoplasm. It carries out the reaction IMP + diphosphate = hypoxanthine + 5-phospho-alpha-D-ribose 1-diphosphate. It catalyses the reaction GMP + diphosphate = guanine + 5-phospho-alpha-D-ribose 1-diphosphate. Its pathway is purine metabolism; IMP biosynthesis via salvage pathway; IMP from hypoxanthine: step 1/1. Catalyzes a salvage reaction resulting in the formation of IMP that is energically less costly than de novo synthesis. The sequence is that of Hypoxanthine/guanine phosphoribosyltransferase from Methanosarcina mazei (strain ATCC BAA-159 / DSM 3647 / Goe1 / Go1 / JCM 11833 / OCM 88) (Methanosarcina frisia).